The sequence spans 446 residues: Argininosuccinate synthase (446 aa).

ATP contacts are provided by residues 17–25 and Ala-43; that span reads AFSGGLDTS. Tyr-99 is a binding site for L-citrulline. ATP is bound by residues Gly-129 and Thr-131. L-aspartate-binding residues include Thr-131, Asn-135, and Asp-136. Asn-135 is an L-citrulline binding site. Asp-136 provides a ligand contact to ATP. Residues Arg-139 and Ser-192 each contribute to the L-citrulline site. Asp-194 is a binding site for ATP. Thr-201, Glu-203, and Glu-280 together coordinate L-citrulline.

This sequence belongs to the argininosuccinate synthase family. Type 2 subfamily. As to quaternary structure, homotetramer.

Its subcellular location is the cytoplasm. The catalysed reaction is L-citrulline + L-aspartate + ATP = 2-(N(omega)-L-arginino)succinate + AMP + diphosphate + H(+). It functions in the pathway amino-acid biosynthesis; L-arginine biosynthesis; L-arginine from L-ornithine and carbamoyl phosphate: step 2/3. The protein is Argininosuccinate synthase of Burkholderia mallei (strain NCTC 10247).